A 130-amino-acid chain; its full sequence is Small ribosomal subunit protein uS11c (130 aa).

This sequence belongs to the universal ribosomal protein uS11 family. As to quaternary structure, part of the 30S ribosomal subunit.

It localises to the plastid. Its subcellular location is the chloroplast. In Drimys granadensis, this protein is Small ribosomal subunit protein uS11c.